The sequence spans 3010 residues: Genome polyprotein (3010 aa).

Serine 2 is subject to N-acetylserine; by host. Residues 2 to 23 form an interaction with STAT1 region; that stretch reads STNPKPQRKTKRNTYRRPQDVK. An interaction with EIF2AK2/PKR region spans residues 2–58; sequence STNPKPQRKTKRNTYRRPQDVKFPGGGQIVGGVYVLPRRGPTLGVRATRKTSERSQP. The interval 2–59 is interaction with DDX3X; the sequence is STNPKPQRKTKRNTYRRPQDVKFPGGGQIVGGVYVLPRRGPTLGVRATRKTSERSQPR. The tract at residues 2 to 75 is disordered; the sequence is STNPKPQRKT…PKARRPEGRA (74 aa). Topologically, residues 2–168 are cytoplasmic; sequence STNPKPQRKT…EDGVNYATGN (167 aa). 2 short sequence motifs (nuclear localization signal) span residues 5–13 and 38–43; these read PKPQRKTKR and PRRGPT. A compositionally biased stretch (basic residues) spans 7–16; it reads PQRKTKRNTY. Residue serine 53 is modified to Phosphoserine; by host. 2 consecutive short sequence motifs (nuclear localization signal) follow at residues 58 to 64 and 66 to 71; these read PRGRRQP and PKARRP. Positions 58–68 are enriched in basic residues; the sequence is PRGRRQPIPKA. Serine 99 carries the phosphoserine; by host modification. An important for endoplasmic reticulum and mitochondrial localization region spans residues 112 to 152; it reads PRRRSRNLGKVIDTLTCGFADLMGYIPLVGAPLGGAARALA. Serine 116 carries the post-translational modification Phosphoserine; by host PKA. The interaction with APOA2 stretch occupies residues 122 to 173; sequence VIDTLTCGFADLMGYIPLVGAPLGGAARALAHGVRVLEDGVNYATGNLPGCS. Residues 164-167 are important for lipid droplets localization; sequence YATG. The chain crosses the membrane as a helical span at residues 169–189; the sequence is LPGCSFSIFLLALLSCLTIPA. A propeptide spans 178–191 (ER anchor for the core protein, removed in mature form by host signal peptidase); the sequence is LLALLSCLTIPASA. Residues 190–358 are Lumenal-facing; sequence SAYQVRNASG…AGAHWGVLAG (169 aa). N-linked (GlcNAc...) asparagine; by host glycosylation is found at asparagine 196, asparagine 209, asparagine 234, and asparagine 250. The tract at residues 265–296 is important for fusion; the sequence is LVGAAAFCSAMYVGDLCGSVFLVSQLFTFSPR. Asparagine 305 is a glycosylation site (N-linked (GlcNAc...) asparagine; by host). Residues 359 to 379 traverse the membrane as a helical segment; that stretch reads LAYYSMVGNWAKVLIVMLLFA. The Lumenal segment spans residues 380 to 725; sequence GVDGVTYTTG…WEYIVLLFLL (346 aa). Residues 385 to 411 form an HVR1 region; sequence TYTTGGSQARHTQSVTSFFTQGPAQRI. 4 N-linked (GlcNAc...) (high mannose) asparagine; by host glycosylation sites follow: asparagine 417, asparagine 423, asparagine 430, and asparagine 448. 4 cysteine pairs are disulfide-bonded: cysteine 429/cysteine 552, cysteine 452/cysteine 459, cysteine 486/cysteine 494, and cysteine 503/cysteine 508. The HVR2 stretch occupies residues 474–479; it reads YTEPRD. The CD81-binding 1 stretch occupies residues 480–493; the sequence is LDQRPYCWHYAPRQ. A glycan (N-linked (GlcNAc...) (high mannose) asparagine; by host) is linked at asparagine 532. N-linked (GlcNAc...) asparagine; by host glycosylation occurs at asparagine 540. The segment at 544–551 is CD81-binding 2; it reads PPQGNWFG. An N-linked (GlcNAc...) (high mannose) asparagine; by host glycan is attached at asparagine 556. Residues cysteine 564 and cysteine 569 are joined by a disulfide bond. N-linked (GlcNAc...) (high mannose) asparagine; by host glycosylation is present at asparagine 576. 3 disulfides stabilise this stretch: cysteine 581-cysteine 585, cysteine 597-cysteine 620, and cysteine 607-cysteine 644. 2 N-linked (GlcNAc...) (high mannose) asparagine; by host glycosylation sites follow: asparagine 623 and asparagine 645. Residues cysteine 652 and cysteine 677 are joined by a disulfide bond. The interval 660-671 is PKR/eIF2-alpha phosphorylation homology domain (PePHD); that stretch reads SELSPLLLSTTE. A helical membrane pass occupies residues 726-746; that stretch reads LADARVCACLWMMLLIAQAEA. Topologically, residues 747–757 are lumenal; that stretch reads ALENLVVLNAA. A helical transmembrane segment spans residues 758–778; the sequence is SLAGADGILSFLVFFCAAWYI. Topologically, residues 779 to 781 are cytoplasmic; sequence KGR. The helical transmembrane segment at 782-803 threads the bilayer; that stretch reads LVPGAAYALYGVWPLLLLLLAL. Residues 804-813 lie on the Lumenal side of the membrane; that stretch reads PPRAYAMDRE. A helical membrane pass occupies residues 814 to 834; that stretch reads MAASCGGVVFVGLILLTLSPH. The Cytoplasmic portion of the chain corresponds to 835–838; that stretch reads YKVF. A helical membrane pass occupies residues 839 to 859; the sequence is LARLIWWLQYFITRAEAHLCV. Topologically, residues 860–881 are lumenal; it reads WVPPLNVRGGRDAIILLTCAAH. The chain crosses the membrane as a helical span at residues 882–902; it reads PELIFDITKLLLAILGPLMVL. Residues 903–1026 enclose the Peptidase C18 domain; it reads QAAITAMPYF…SIEGQGWRLL (124 aa). The Cytoplasmic portion of the chain corresponds to 903 to 1657; sequence QAAITAMPYF…CMSADLEVVT (755 aa). Residues 904 to 1206 form a protease NS2-3 region; the sequence is AAITAMPYFV…PVESMETTMR (303 aa). Cysteine 922 carries the S-palmitoyl cysteine; by host lipid modification. The interval 929-949 is interaction with host SCPS1; it reads AGGHYVQMAFMKLAALTGTYV. Active-site for protease NS2 activity; shared with dimeric partner residues include histidine 952, glutamate 972, and cysteine 993. In terms of domain architecture, Peptidase S29 spans 1027-1208; it reads APITAYAQQT…ESMETTMRSP (182 aa). Residues histidine 1083 and aspartate 1107 each act as charge relay system; for serine protease NS3 activity in the active site. Zn(2+) contacts are provided by cysteine 1123 and cysteine 1125. Serine 1165 serves as the catalytic Charge relay system; for serine protease NS3 activity. Residues cysteine 1171 and histidine 1175 each contribute to the Zn(2+) site. The 153-residue stretch at 1217–1369 folds into the Helicase ATP-binding domain; sequence PAVPQTFQVA…PNIEEVALSN (153 aa). 1230–1237 is an ATP binding site; it reads APTGSGKS. Residues serine 1237 and glutamate 1317 each coordinate Mg(2+). A DECH box motif is present at residues 1316 to 1319; that stretch reads DECH. The tract at residues 1486–1497 is RNA-binding; sequence QRRGRTGRGRGG. A helical transmembrane segment spans residues 1658–1678; sequence STWVLVGGVLAALAAYCLTTG. An NS3-binding region spans residues 1679–1690; that stretch reads SVVIVGRIILSG. Residues 1679–1805 are Cytoplasmic-facing; the sequence is SVVIVGRIIL…SITSPLTTQN (127 aa). A helical transmembrane segment spans residues 1806-1824; the sequence is TLLFNILGGWVAAQLAPPS. The Lumenal portion of the chain corresponds to 1825–1828; that stretch reads AASA. Residues 1829-1849 traverse the membrane as a helical segment; it reads FVGAGIAGAAIGSIGLGKVLV. Aspartate 1850 is a topological domain (cytoplasmic). The helical transmembrane segment at 1851 to 1871 threads the bilayer; sequence ILAGYGAGVAGALVAFKVMSG. Residues 1872 to 1881 lie on the Lumenal side of the membrane; the sequence is EAPSAEDLVN. The chain crosses the membrane as a helical span at residues 1882 to 1902; it reads LLPAILSPGALVVGVVCAAIL. The Cytoplasmic segment spans residues 1903–1972; the sequence is RRHVGPGEGA…WINEDCSTPC (70 aa). 2 S-palmitoyl cysteine; by host lipidation sites follow: cysteine 1968 and cysteine 1972. Residues 1973-2002 lie within the membrane without spanning it; the sequence is SGSWLKDVWDWICTVLTDFKTWLQSKLLPK. Topologically, residues 2003–2989 are cytoplasmic; sequence LPGVPFFSCQ…YHSLSRARPR (987 aa). Residues cysteine 2011, cysteine 2029, cysteine 2031, and cysteine 2052 each contribute to the Zn(2+) site. Residues 2120–2208 are FKBP8-binding; the sequence is EFFTELDGVR…ASSSASQLSA (89 aa). Residues 2120-2332 are transcriptional activation; the sequence is EFFTELDGVR…PIPPPRKKRT (213 aa). Positions 2135 to 2139 are interaction with non-structural protein 4A; sequence PACRP. A disordered region spans residues 2187–2220; that stretch reads KRRLARGSPPSLASSSASQLSAPSLKATCTTHHD. Residues 2189–2441 are interaction with host SKP2; it reads RLARGSPPSL…PCAAEESKLP (253 aa). Phosphoserine; by host; in p56 is present on serine 2194. The span at 2194-2211 shows a compositional bias: low complexity; the sequence is SPPSLASSSASQLSAPSL. Phosphoserine; by host; in p58 is present on residues serine 2197, serine 2201, serine 2204, serine 2207, and serine 2210. The segment at 2210 to 2249 is ISDR; it reads SLKATCTTHHDSPDADLIEANLLWRQEMGGNITRVESENK. The segment at 2210 to 2275 is interaction with EIF2AK2/PKR; that stretch reads SLKATCTTHH…REVSVAAEIL (66 aa). Residues 2249 to 2306 are NS4B-binding; that stretch reads KVVILDSFDPLRAEEDEREVSVAAEILRKSKKFPPALPIWARPDYNPPLLESWKSPDY. Residues 2322–2325 carry the SH3-binding motif; that stretch reads PPIP. The Nuclear localization signal motif lies at 2326–2334; it reads PPRKKRTVV. Lysine 2350 is covalently cross-linked (Glycyl lysine isopeptide (Lys-Gly) (interchain with G-Cter in ubiquitin)). Over residues 2351–2371 the composition is skewed to polar residues; it reads TFGSSGSSAVDSGTATAPPDQ. The tract at residues 2351–2408 is disordered; the sequence is TFGSSGSSAVDSGTATAPPDQTSDDGDKESDVESYSSMPPLEGEPGDPDLSDGSWSTV. A V3 region spans residues 2354–2377; sequence SSGSSAVDSGTATAPPDQTSDDGD. Residues 2372–2382 are compositionally biased toward acidic residues; the sequence is TSDDGDKESDV. Serine 2448 and serine 2461 each carry phosphoserine; by host. The 119-residue stretch at 2633–2751 folds into the RdRp catalytic domain; it reads PMGFSYDTRC…ICESAGTQED (119 aa). Positions 2639, 2737, and 2738 each coordinate Mg(2+). The chain crosses the membrane as a helical span at residues 2990-3010; sequence WFMWCLLLLSVGVGIYLLPNR.

Belongs to the hepacivirus polyprotein family. Homooligomer. Interacts with E1 (via C-terminus). Interacts with the non-structural protein 5A. Interacts (via N-terminus) with host STAT1 (via SH2 domain); this interaction results in decreased STAT1 phosphorylation and ubiquitin-mediated proteasome-dependent STAT1 degradation, leading to decreased IFN-stimulated gene transcription. Interacts with host STAT3; this interaction constitutively activates STAT3. Interacts with host LTBR receptor. Interacts with host TNFRSF1A receptor and possibly induces apoptosis. Interacts with host HNRPK. Interacts with host YWHAE. Interacts with host UBE3A/E6AP. Interacts with host DDX3X. Interacts with host APOA2. Interacts with host RXRA protein. Interacts with host SP110 isoform 3/Sp110b; this interaction sequesters the transcriptional corepressor SP110 away from the nucleus. Interacts with host CREB3 nuclear transcription protein; this interaction triggers cell transformation. Interacts with host ACY3. Interacts with host C1QR1. Interacts with host RBM24; this interaction, which enhances the interaction of the mature core protein with 5'-UTR, may inhibit viral translation and favor replication. Interacts with host EIF2AK2/PKR; this interaction induces the autophosphorylation of EIF2AK2. Part of the viral assembly initiation complex composed of NS2, E1, E2, NS3, NS4A, NS5A and the mature core protein. As to quaternary structure, forms a heterodimer with envelope glycoprotein E2. Interacts with mature core protein. Interacts with protease NS2. The heterodimer E1/E2 interacts with host CLDN1; this interaction plays a role in viral entry into host cell. Interacts with host SPSB2 (via C-terminus). Part of the viral assembly initiation complex composed of NS2, E1, E2, NS3, NS4A, NS5A and the mature core protein. Interacts with host NEURL3; this interaction prevents E1 binding to glycoprotein E2. In terms of assembly, forms a heterodimer with envelope glycoprotein E1. Interacts with host CD81 and SCARB1 receptors; these interactions play a role in viral entry into host cell. Interacts with host EIF2AK2/PKR; this interaction inhibits EIF2AK2 and probably allows the virus to evade the innate immune response. Interacts with host CD209/DC-SIGN and CLEC4M/DC-SIGNR. Interact with host SPCS1; this interaction is essential for viral particle assembly. Interacts with protease NS2. The heterodimer E1/E2 interacts with host CLDN1; this interaction plays a role in viral entry into host cell. Part of the viral assembly initiation complex composed of NS2, E1, E2, NS3, NS4A, NS5A and the mature core protein. Interacts with host SLC3A2/4F2hc; the interaction may facilitate viral entry into host cell. Interacts with human PLSCR1. Homohexamer. Homoheptamer. Interacts with protease NS2. As to quaternary structure, homodimer. Interacts with host SPCS1; this interaction is essential for viral particle assembly. Interacts with envelope glycoprotein E1. Interacts with envelope glycoprotein E2. Interacts with viroporin p7. Interacts with serine protease/helicase NS3. Part of the replication complex composed of NS2, NS3, NS4A, NS4B, NS5A and the RNA-directed RNA polymerase embedded in an ER-derived membranous web. Part of the viral assembly initiation complex composed of NS2, E1, E2, NS3, NS4A, NS5A and the mature core protein. In terms of assembly, interacts with protease NS2. Interacts with non-structural protein 4A; this interaction stabilizes the folding of NS3 serine protease. NS3-NS4A interaction is essential for NS3 activation and allows membrane anchorage of the latter. NS3/NS4A complex also prevents phosphorylation of host IRF3, thus preventing the establishment of dsRNA induced antiviral state. Interacts with host MAVS; this interaction leads to the cleavage and inhibition of host MAVS. Interacts with host TICAM1; this interaction leads to the cleavage and inhibition of host TICAM1. Interacts with host TANK-binding kinase/TBK1; this interaction results in the inhibition of the association between TBK1 and IRF3, which leads to the inhibition of IRF3 activation. Interacts with host RBM24. Part of the replication complex composed of NS2, NS3, NS4A, NS4B, NS5A and the RNA-directed RNA polymerase embedded in an ER-derived membranous web. Part of the viral assembly initiation complex composed of NS2, E1, E2, NS3, NS4A, NS5A and the mature core protein. Interacts with NS3 serine protease; this interaction stabilizes the folding of NS3 serine protease. NS3-NS4A interaction is essential for NS3 activation and allows membrane anchorage of the latter. Interacts with non-structural protein 5A (via N-terminus). Part of the replication complex composed of NS2, NS3, NS4A, NS4B, NS5A and the RNA-directed RNA polymerase embedded in an ER-derived membranous web. Part of the viral assembly initiation complex composed of NS2, E1, E2, NS3, NS4A, NS5A and the mature core protein. As to quaternary structure, homomultimer. Interacts with non-structural protein NS5A. Interacts with host PLA2G4C; this interaction likely initiates the recruitment of replication complexes to lipid droplets. Interacts with host STING; this interaction disrupts the interaction between STING and TBK1 thereby suppressing the interferon signaling. Part of the replication complex composed of NS2, NS3, NS4A, NS4B, NS5A and the RNA-directed RNA polymerase embedded in an ER-derived membranous web. In terms of assembly, monomer. Homodimer; dimerization is required for RNA-binding. Interacts with the mature core protein. Interacts (via N-terminus) with non-structural protein 4A. Interacts with non-structural protein 4B. Interacts (via region D2) with RNA-directed RNA polymerase. Part of the viral assembly initiation complex composed of NS2, E1, E2, NS3, NS4A, NS5A and the mature core protein. Part of the replication complex composed of NS2, NS3, NS4A, NS4B, NS5A and the RNA-directed RNA polymerase embedded in an ER-derived membranous web. Interacts with host GRB2. Interacts with host BIN1. Interacts with host PIK3R1. Interacts with host SRCAP. Interacts with host FKBP8. Interacts (via C-terminus) with host VAPB (via MSP domain). Interacts with host EIF2AK2/PKR; this interaction leads to disruption of EIF2AK2 dimerization by NS5A and probably allows the virus to evade the innate immune response. Interacts (via N-terminus) with host PACSIN2 (via N-terminus); this interaction attenuates protein kinase C alpha-mediated phosphorylation of PACSIN2 by disrupting the interaction between PACSIN2 and PRKCA. Interacts (via N-terminus) with host SRC kinase (via SH2 domain). Interacts with most Src-family kinases. Interacts with host IFI27 and SKP2; promotes the ubiquitin-mediated proteasomal degradation of NS5A. Interacts with host GPS2. Interacts with host TNFRSF21; this interaction allows the modulation by the virus of JNK, p38 MAPK, STAT3, and Akt signaling pathways in a DR6-dependent manner. Interacts (via N-terminus) with host CIDEB (via N-terminus); this interaction seems to regulate the association of HCV particles with APOE. Interacts with host CHKA/Choline Kinase-alpha; CHKA bridges host PI4KA and NS5A and potentiates NS5A-stimulated PI4KA activity, which then facilitates the targeting of the ternary complex to the ER for viral replication. Interacts with host SPSB2 (via C-terminus); this interaction targets NS5A for ubiquitination and degradation. Interacts with host RAB18; this interaction may promote the association of NS5A and other replicase components with lipid droplets. Interacts (via region D2) with host PPIA/CYPA; the interaction stimulates RNA-binding ability of NS5A and is dependent on the peptidyl-prolyl cis-trans isomerase activity of PPIA/CYPA. Interacts with host TRIM14; this interaction induces the degradation of NS5A. Homooligomer. Interacts with non-structural protein 5A. Interacts with host VAPB. Interacts with host PRK2/PKN2. Interacts with host HNRNPA1 and SEPT6; these interactions facilitate viral replication. Part of the replication complex composed of NS2, NS3, NS4A, NS4B, NS5A and the RNA-directed RNA polymerase. It depends on Zn(2+) as a cofactor. Mg(2+) is required as a cofactor. Specific enzymatic cleavages in vivo yield mature proteins. The structural proteins, core, E1, E2 and p7 are produced by proteolytic processing by host signal peptidases. The core protein precursor is synthesized as a 23 kDa, which is retained in the ER membrane through the hydrophobic signal peptide. Cleavage by the signal peptidase releases the 21 kDa mature core protein. The cleavage of the core protein precursor occurs between aminoacids 176 and 188 but the exact cleavage site is not known. Some degraded forms of the core protein appear as well during the course of infection. The other proteins (p7, NS2, NS3, NS4A, NS4B, NS5A and NS5B) are cleaved by the viral proteases. Autoprocessing between NS2 and NS3 is mediated by the NS2 cysteine protease catalytic domain and regulated by the NS3 N-terminal domain. In terms of processing, phosphorylated by host PKC and PKA. Post-translationally, ubiquitinated; mediated by UBE3A and leading to core protein subsequent proteasomal degradation. Highly N-glycosylated. In terms of processing, palmitoylation is required for NS2/3 autoprocessing and E2 recruitment to membranes. Post-translationally, palmitoylated. This modification may play a role in its polymerization or in protein-protein interactions. Phosphorylated on serines in a basal form termed p56. p58 is a hyperphosphorylated form of p56. p56 and p58 coexist in the cell in roughly equivalent amounts. Hyperphosphorylation is dependent on the presence of NS4A. Host CSNK1A1/CKI-alpha or RPS6KB1 kinases may be responsible for NS5A phosphorylation. In terms of processing, tyrosine phosphorylation is essential for the interaction with host SRC. Post-translationally, ubiquitinated. Ubiquitination, most probably at Lys-2350, mediated by host IFI27 and SKP2 leads to proteasomal degradation, restricting viral infection. Ubiquitination by host TRIM22 leads to interruption of viral replication. The N-terminus is phosphorylated by host PRK2/PKN2.

The protein localises to the host endoplasmic reticulum membrane. It is found in the host mitochondrion membrane. The protein resides in the virion. Its subcellular location is the host cytoplasm. It localises to the host nucleus. The protein localises to the host lipid droplet. It is found in the virion membrane. The protein resides in the host mitochondrion. Its subcellular location is the host cell membrane. It localises to the host perinuclear region. The catalysed reaction is Hydrolysis of four peptide bonds in the viral precursor polyprotein, commonly with Asp or Glu in the P6 position, Cys or Thr in P1 and Ser or Ala in P1'.. It carries out the reaction a ribonucleoside 5'-triphosphate + H2O = a ribonucleoside 5'-diphosphate + phosphate + H(+). It catalyses the reaction ATP + H2O = ADP + phosphate + H(+). The enzyme catalyses RNA(n) + a ribonucleoside 5'-triphosphate = RNA(n+1) + diphosphate. Its activity is regulated as follows. Inhibited by the antiviral drug hexamethylene amiloride. Inhibition by amantadine appears to be genotype-dependent. Also inhibited by long-alkyl-chain iminosugar derivatives. Activity is up-regulated by PRK2/PKN2-mediated phosphorylation. Its function is as follows. Packages viral RNA to form a viral nucleocapsid, and promotes virion budding. Participates in the viral particle production as a result of its interaction with the non-structural protein 5A. Binds RNA and may function as a RNA chaperone to induce the RNA structural rearrangements taking place during virus replication. Modulates viral translation initiation by interacting with viral IRES and 40S ribosomal subunit. Affects various cell signaling pathways, host immunity and lipid metabolism. Prevents the establishment of cellular antiviral state by blocking the interferon-alpha/beta (IFN-alpha/beta) and IFN-gamma signaling pathways and by blocking the formation of phosphorylated STAT1 and promoting ubiquitin-mediated proteasome-dependent degradation of STAT1. Activates STAT3 leading to cellular transformation. Regulates the activity of cellular genes, including c-myc and c-fos. May repress the promoter of p53, and sequester CREB3 and SP110 isoform 3/Sp110b in the cytoplasm. Represses cell cycle negative regulating factor CDKN1A, thereby interrupting an important check point of normal cell cycle regulation. Targets transcription factors involved in the regulation of inflammatory responses and in the immune response: suppresses TNF-induced NF-kappa-B activation, and activates AP-1. Binds to dendritic cells (DCs) via C1QR1, resulting in down-regulation of T-lymphocytes proliferation. Alters lipid metabolism by interacting with hepatocellular proteins involved in lipid accumulation and storage. Induces up-regulation of FAS promoter activity, and thereby contributes to the increased triglyceride accumulation in hepatocytes (steatosis). In terms of biological role, forms a heterodimer with envelope glycoprotein E2, which mediates virus attachment to the host cell, virion internalization through clathrin-dependent endocytosis and fusion with host membrane. Fusion with the host cell is most likely mediated by both E1 and E2, through conformational rearrangements of the heterodimer required for fusion rather than a classical class II fusion mechanism. E1/E2 heterodimer binds host apolipoproteins such as APOB and ApoE thereby forming a lipo-viro-particle (LVP). APOE associated to the LVP allows the initial virus attachment to cell surface receptors such as the heparan sulfate proteoglycans (HSPGs), syndecan-1 (SDC1), syndecan-1 (SDC2), the low-density lipoprotein receptor (LDLR) and scavenger receptor class B type I (SCARB1). The cholesterol transfer activity of SCARB1 allows E2 exposure and binding of E2 to SCARB1 and the tetraspanin CD81. E1/E2 heterodimer binding on CD81 activates the epithelial growth factor receptor (EGFR) signaling pathway. Diffusion of the complex E1-E2-EGFR-SCARB1-CD81 to the cell lateral membrane allows further interaction with Claudin 1 (CLDN1) and occludin (OCLN) to finally trigger HCV entry. Forms a heterodimer with envelope glycoprotein E1, which mediates virus attachment to the host cell, virion internalization through clathrin-dependent endocytosis and fusion with host membrane. Fusion with the host cell is most likely mediated by both E1 and E2, through conformational rearrangements of the heterodimer required for fusion rather than a classical class II fusion mechanism. The interaction between envelope glycoprotein E2 and host apolipoprotein E/APOE allows the proper assembly, maturation and infectivity of the viral particles. This interaction is probably promoted via the up-regulation of cellular autophagy by the virus. E1/E2 heterodimer binds host apolipoproteins such as APOB and APOE thereby forming a lipo-viro-particle (LVP). APOE associated to the LVP allows the initial virus attachment to cell surface receptors such as the heparan sulfate proteoglycans (HSPGs), syndecan-1 (SDC1), syndecan-1 (SDC2), the low-density lipoprotein receptor (LDLR) and scavenger receptor class B type I (SCARB1). The cholesterol transfer activity of SCARB1 allows E2 exposure and binding of E2 to SCARB1 and the tetraspanin CD81. E1/E2 heterodimer binding on CD81 activates the epithelial growth factor receptor (EGFR) signaling pathway. Diffusion of the complex E1-E2-EGFR-SCARB1-CD81 to the cell lateral membrane allows further interaction with Claudin 1 (CLDN1) and occludin (OCLN) to finally trigger HCV entry. Inhibits host EIF2AK2/PKR activation, preventing the establishment of an antiviral state. Viral ligand for CD209/DC-SIGN and CLEC4M/DC-SIGNR, which are respectively found on dendritic cells (DCs), and on liver sinusoidal endothelial cells and macrophage-like cells of lymph node sinuses. These interactions allow the capture of circulating HCV particles by these cells and subsequent facilitated transmission to permissive cells such as hepatocytes and lymphocyte subpopulations. The interaction between E2 and host amino acid transporter complex formed by SLC3A2 and SLC7A5/LAT1 may facilitate viral entry into host cell. Functionally, ion channel protein that acts as a viroporin and plays an essential role in the assembly, envelopment and secretion of viral particles. Regulates the host cell secretory pathway, which induces the intracellular retention of viral glycoproteins and favors assembly of viral particles. Creates a pore in acidic organelles and releases Ca(2+) and H(+) in the cytoplasm of infected cells, leading to a productive viral infection. High levels of cytoplasmic Ca(2+) may trigger membrane trafficking and transport of viral ER-associated proteins to viroplasms, sites of viral genome replication. This ionic imbalance induces the assembly of the inflammasome complex, which triggers the maturation of pro-IL-1beta into IL-1beta through the action of caspase-1. Targets also host mitochondria and induces mitochondrial depolarization. In addition of its role as a viroporin, acts as a lipid raft adhesion factor. Its function is as follows. Cysteine protease required for the proteolytic auto-cleavage between the non-structural proteins NS2 and NS3. The N-terminus of NS3 is required for the function of NS2 protease (active region NS2-3). Promotes the initiation of viral particle assembly by mediating the interaction between structural and non-structural proteins. In terms of biological role, displays three enzymatic activities: serine protease with a chymotrypsin-like fold, NTPase and RNA helicase. NS3 serine protease, in association with NS4A, is responsible for the cleavages of NS3-NS4A, NS4A-NS4B, NS4B-NS5A and NS5A-NS5B. The NS3/NS4A complex prevents phosphorylation of host IRF3, thus preventing the establishment of dsRNA induced antiviral state. The NS3/NS4A complex induces host amino acid transporter component SLC3A2, thus contributing to HCV propagation. NS3 RNA helicase binds to RNA and unwinds both dsDNA and dsRNA in the 3' to 5' direction, and likely resolves RNA complicated stable secondary structures in the template strand. Binds a single ATP and catalyzes the unzipping of a single base pair of dsRNA. Inhibits host antiviral proteins TBK1 and IRF3 thereby preventing the establishment of an antiviral state. Cleaves host MAVS/CARDIF thereby preventing the establishment of an antiviral state. Cleaves host TICAM1/TRIF, thereby disrupting TLR3 signaling and preventing the establishment of an antiviral state. Induces a specific membrane alteration that serves as a scaffold for the virus replication complex. This membrane alteration gives rise to the so-called ER-derived membranous web that contains the replication complex. NS4B self-interaction contributes to its function in membranous web formation. Promotes host TRIF protein degradation in a CASP8-dependent manner thereby inhibiting host TLR3-mediated interferon signaling. Disrupts the interaction between STING and TBK1 contributing to the inhibition of interferon signaling. Functionally, phosphorylated protein that is indispensable for viral replication and assembly. Both hypo- and hyperphosphorylated states are required for the viral life cycle. The hyperphosphorylated form of NS5A is an inhibitor of viral replication. Involved in RNA-binding and especially in binding to the viral genome. Zinc is essential for RNA-binding. Participates in the viral particle production as a result of its interaction with the mature viral core protein. Its interaction with host VAPB may target the viral replication complex to vesicles. Down-regulates viral IRES translation initiation. Mediates interferon resistance, presumably by interacting with and inhibiting host EIF2AK2/PKR. Prevents BIN1-induced apoptosis. Acts as a transcriptional activator of some host genes important for viral replication when localized in the nucleus. Via the interaction with host PACSIN2, modulates lipid droplet formation in order to promote virion assembly. Modulates TNFRSF21/DR6 signaling pathway for viral propagation. Its function is as follows. RNA-dependent RNA polymerase that performs primer-template recognition and RNA synthesis during viral replication. Initiates RNA transcription/replication at a flavin adenine dinucleotide (FAD), resulting in a 5'- FAD cap on viral RNAs. In this way, recognition of viral 5' RNA by host pattern recognition receptors can be bypassed, thereby evading activation of antiviral pathways. In terms of biological role, peptide cofactor which forms a non-covalent complex with the N-terminal of NS3 serine protease. The NS3/NS4A complex prevents phosphorylation of host IRF3, thus preventing the establishment of dsRNA induced antiviral state. The NS3/NS4A complex induces host amino acid transporter component SLC3A2, thus contributing to HCV propagation. This Homo sapiens (Human) protein is Genome polyprotein.